Here is a 1040-residue protein sequence, read N- to C-terminus: Multidrug resistance protein MdtB (1040 aa).

The next 12 helical transmembrane spans lie at 25-45 (LLMA…PVAA), 347-367 (LMLA…NIPA), 369-389 (IIPG…MVFL), 396-416 (LTLM…IVVI), 440-460 (IGFT…PLLF), 472-492 (FAVT…TLTP), 537-557 (WLTL…WIVI), 863-883 (LGST…VLGV), 888-908 (FIHP…ALLA), 910-930 (IIAG…LIGI), 968-988 (ILMT…STGV), and 998-1018 (IAMV…TPVI).

Belongs to the resistance-nodulation-cell division (RND) (TC 2.A.6) family. MdtB subfamily. Part of a tripartite efflux system composed of MdtA, MdtB and MdtC. MdtB forms a heteromultimer with MdtC.

It localises to the cell inner membrane. The sequence is that of Multidrug resistance protein MdtB from Salmonella schwarzengrund (strain CVM19633).